A 559-amino-acid polypeptide reads, in one-letter code: Probable D-2-hydroxyglutarate dehydrogenase, mitochondrial (559 aa).

Residues 1 to 80 (MARRAAAGLL…MNFEVQKRSF (80 aa)) constitute a mitochondrion transit peptide. The region spanning 131–310 (YKGSSQLLLL…TKIAILTPAK (180 aa)) is the FAD-binding PCMH-type domain.

It belongs to the FAD-binding oxidoreductase/transferase type 4 family. Homodimer. It depends on FAD as a cofactor.

The protein localises to the mitochondrion. It carries out the reaction (R)-2-hydroxyglutarate + A = 2-oxoglutarate + AH2. Functionally, catalyzes the oxidation of D-2-hydroxyglutarate to alpha-ketoglutarate. The protein is Probable D-2-hydroxyglutarate dehydrogenase, mitochondrial (D2HGDH) of Oryza sativa subsp. japonica (Rice).